Consider the following 385-residue polypeptide: GDSL esterase/lipase At5g08460 (385 aa).

Positions 1–35 are cleaved as a signal peptide; that stretch reads MHDSEIFKFKDMMMMSCTVQTLVLVPWFLVVFVLA. Ser56 functions as the Nucleophile in the catalytic mechanism. 2 N-linked (GlcNAc...) asparagine glycosylation sites follow: Asn218 and Asn285. Residues Asp350 and His353 contribute to the active site. Asn368 and Asn378 each carry an N-linked (GlcNAc...) asparagine glycan.

Belongs to the 'GDSL' lipolytic enzyme family.

Its subcellular location is the secreted. This is GDSL esterase/lipase At5g08460 from Arabidopsis thaliana (Mouse-ear cress).